We begin with the raw amino-acid sequence, 351 residues long: SH3 domain-containing protein 3 (351 aa).

2 coiled-coil regions span residues 1–21 (MDAFRRQASKLRDQVAKQQLA) and 193–213 (LQLAEAKMQELKANMAVLGKE). One can recognise a BAR domain in the interval 31-267 (YESSDVMVID…MVTEKQHKES (237 aa)). One can recognise an SH3 domain in the interval 281–340 (TSYFLAEVIHPFSAASEKELDLDKGDYIVVRKVSQTGWAEGECKGKAGWFPMAYIEKRQR).

As to quaternary structure, interacts with FREE1. Interacts (via SH3 domain) with DRP2A/ADL6. Binds to SH3P2. In terms of tissue distribution, detected in all tissues except seedlings.

Its subcellular location is the cytoplasmic vesicle. It localises to the clathrin-coated vesicle. Its function is as follows. May be involved in the recruitment of DRP2A to the accessory protein complex and in the negative regulation of its GTPase activity. The polypeptide is SH3 domain-containing protein 3 (Arabidopsis thaliana (Mouse-ear cress)).